The chain runs to 233 residues: UPF0173 metal-dependent hydrolase Igni_1254 (233 aa).

The protein belongs to the UPF0173 family.

This Ignicoccus hospitalis (strain KIN4/I / DSM 18386 / JCM 14125) protein is UPF0173 metal-dependent hydrolase Igni_1254.